A 547-amino-acid polypeptide reads, in one-letter code: Glucose-6-phosphate isomerase (547 aa).

Glu354 serves as the catalytic Proton donor. Active-site residues include His385 and Lys513.

This sequence belongs to the GPI family.

The protein resides in the cytoplasm. It carries out the reaction alpha-D-glucose 6-phosphate = beta-D-fructose 6-phosphate. The protein operates within carbohydrate biosynthesis; gluconeogenesis. It participates in carbohydrate degradation; glycolysis; D-glyceraldehyde 3-phosphate and glycerone phosphate from D-glucose: step 2/4. In terms of biological role, catalyzes the reversible isomerization of glucose-6-phosphate to fructose-6-phosphate. This is Glucose-6-phosphate isomerase from Erwinia tasmaniensis (strain DSM 17950 / CFBP 7177 / CIP 109463 / NCPPB 4357 / Et1/99).